The primary structure comprises 138 residues: Large ribosomal subunit protein uL16 (138 aa).

Over residues 1–13 (MLQPSRRKYRKEQ) the composition is skewed to basic residues. The tract at residues 1 to 22 (MLQPSRRKYRKEQKGRNTGLAT) is disordered.

This sequence belongs to the universal ribosomal protein uL16 family. In terms of assembly, part of the 50S ribosomal subunit.

In terms of biological role, binds 23S rRNA and is also seen to make contacts with the A and possibly P site tRNAs. This is Large ribosomal subunit protein uL16 from Bordetella petrii (strain ATCC BAA-461 / DSM 12804 / CCUG 43448).